We begin with the raw amino-acid sequence, 204 residues long: MGAYKYVSELWRKKQSDVMRFLQRVRCWEYRQQPSIVRLVRPTRPDKARRLGYKAKQGFVVYRVRVRRGGRKRPVPKGIVYGKPTNQGVTQLKFQRSKRSVAEERAGRKLGGLRVVNSYWLNEDSTYKYYEIILVDPAHNAVRNDPRINWICNPVHKHRELRGLTSEGKKNRGLRGKGHNNHKNRPSRRATWKKNNSISLRRYR.

A disordered region spans residues 162-204; it reads RGLTSEGKKNRGLRGKGHNNHKNRPSRRATWKKNNSISLRRYR. Over residues 171–192 the composition is skewed to basic residues; it reads NRGLRGKGHNNHKNRPSRRATW. Over residues 193-204 the composition is skewed to polar residues; the sequence is KKNNSISLRRYR.

It belongs to the eukaryotic ribosomal protein eL15 family.

In Arabidopsis thaliana (Mouse-ear cress), this protein is Large ribosomal subunit protein eL15y (RPL15B).